The chain runs to 279 residues: Presqualene diphosphate synthase (279 aa).

Belongs to the phytoene/squalene synthase family. HpnD subfamily.

It carries out the reaction 2 (2E,6E)-farnesyl diphosphate = presqualene diphosphate + diphosphate. Its pathway is secondary metabolite biosynthesis; hopanoid biosynthesis. In terms of biological role, involved in the biosynthesis of the hopanoid precursor squalene (SQ) from farnesyl diphosphate (FPP). Catalyzes the first step, the formation of presqualene diphosphate (PSPP) from two molecules of FPP. This chain is Presqualene diphosphate synthase, found in Sinorhizobium fredii (strain NBRC 101917 / NGR234).